The sequence spans 462 residues: U2 small nuclear ribonucleoprotein auxiliary factor 35 kDa subunit-related protein 2 (462 aa).

Over residues 1-13 (METAGATADATAG) the composition is skewed to low complexity. Disordered stretches follow at residues 1 to 22 (METAGATADATAGPQKLSRKKY), 44 to 66 (AELAQKEEEEDPLAEEKRLEEER), and 115 to 138 (WEEQQRKEREEEEQKRQEKREREE). K49 is covalently cross-linked (Glycyl lysine isopeptide (Lys-Gly) (interchain with G-Cter in SUMO2)). The segment covering 57–66 (AEEKRLEEER) has biased composition (basic and acidic residues). A C3H1-type 1 zinc finger spans residues 170 to 198 (EKDRANCPFYSKTGACRFGDRCSRKHNFP). The RRM domain occupies 202-308 (PTLLIKGMFT…RQLQCEFCPV (107 aa)). Residues 310-337 (RWKMAICGLFEVQQCPRGKHCNFLHVFR) form a C3H1-type 2 zinc finger. S353 carries the phosphoserine modification. The interval 354–462 (PDWTSSSFGK…QPQPQPQSDP (109 aa)) is disordered. Positions 364 to 379 (NSERRERASHYDEYYG) are enriched in basic and acidic residues. At S389 the chain carries Phosphoserine. Basic and acidic residues predominate over residues 392–403 (FYKRNGESDRKS). Residues 404–417 (SSRHRVKKSHRYGM) are compositionally biased toward basic residues.

Component of the U11/U12 snRNPs that are part of the U12-type spliceosome. Interacts (via RS domain) with SRSF1 and SRSF2. Interacts with U2AF2/U2AF65. In terms of processing, phosphorylated in the RS domain by SRPK1.

The protein resides in the nucleus. In terms of biological role, pre-mRNA-binding protein required for splicing of both U2- and U12-type introns. Selectively interacts with the 3'-splice site of U2- and U12-type pre-mRNAs and promotes different steps in U2 and U12 intron splicing. Recruited to U12 pre-mRNAs in an ATP-dependent manner and is required for assembly of the prespliceosome, a precursor to other spliceosomal complexes. For U2-type introns, it is selectively and specifically required for the second step of splicing. The chain is U2 small nuclear ribonucleoprotein auxiliary factor 35 kDa subunit-related protein 2 (Zrsr2) from Mus musculus (Mouse).